Reading from the N-terminus, the 571-residue chain is Chondroitin sulfate proteoglycan 5 (571 aa).

The N-terminal stretch at M1–A30 is a signal peptide. Residues V31–C428 are Extracellular-facing. A glycan (O-linked (Xyl...) (chondroitin sulfate) serine) is linked at S38. An N-linked (GlcNAc...) asparagine glycan is attached at N57. The tract at residues N57–P91 is disordered. T76 is a glycosylation site (O-linked (GalNAc...) threonine). An O-linked (Xyl...) (chondroitin sulfate) serine glycan is attached at S123. T132 carries an O-linked (GalNAc...) threonine glycan. Disordered stretches follow at residues D137–L169, G186–W254, and D279–T357. An O-linked (GalNAc...) serine glycan is attached at S143. O-linked (GalNAc...) threonine glycans are attached at residues T144 and T153. 2 O-linked (GalNAc...) serine glycosylation sites follow: S156 and S160. O-linked (GalNAc...) threonine glycosylation is found at T162 and T198. Positions I214–D223 are enriched in acidic residues. T240 carries an O-linked (GalNAc...) threonine glycan. Positions D270–L306 are interaction with TNC and TNR. Residues D279–K291 show a composition bias toward acidic residues. Residues T318 and T322 are each glycosylated (O-linked (GalNAc...) threonine). N-linked (GlcNAc...) asparagine glycosylation is present at N372. The EGF-like domain occupies R376–E418. Disulfide bonds link C379–C392, C386–C402, and C404–C417. A helical membrane pass occupies residues V429–A449. The interaction with GOPC stretch occupies residues F447 to T465. Topologically, residues K450–T571 are cytoplasmic. A phosphoserine mark is found at S472, S480, S488, and S548. Residues E538–V563 are disordered.

As to quaternary structure, interacts with ERBB3 and GOPC. Binds TNR and probably TNC. Interacts with MDK; this interaction is independent of the presence of chondroitin sulfate chains and promotes elongation of oligodendroglial precursor-like cells. N-glycosylated. In terms of processing, O-glycosylated; contains chondroitin sulfate glycans. Part-time proteoglycan, expressed in part as a proteoglycan exhibiting chondroitin sulfate glycans and in part as a non-proteoglycan form. The relative amount of both forms depends on tissues and tissue maturation. Post-translationally, phosphorylated; in intracellular and extracellular parts. As to expression, expressed in cerebral cortex and cerebellum. Expressed in retina (at protein level).

The protein localises to the cell membrane. Its subcellular location is the synaptic cell membrane. The protein resides in the endoplasmic reticulum membrane. It is found in the golgi apparatus membrane. It localises to the cell surface. The protein localises to the secreted. Its function is as follows. May function as a growth and differentiation factor involved in neuritogenesis. May induce ERBB3 activation. In Rattus norvegicus (Rat), this protein is Chondroitin sulfate proteoglycan 5 (Cspg5).